Consider the following 481-residue polypeptide: Delta(14)-sterol reductase ERG24B (481 aa).

Transmembrane regions (helical) follow at residues 11 to 31 (FGGPLGATGIVFGLPILMQVL), 80 to 100 (LFAYYFLSLMLYRIMPAQIVL), 125 to 145 (LTGCAIGTYIYGANFPVWTWI), 149 to 169 (YIQLLTTSTVLTYIISIWTYL), 244 to 264 (TYGFVSDSIVVIALIQAYYVL), 279 to 299 (ITSDGLGFMLTWGDIVWVPFL), 313 to 333 (HLGPIGVGAIGTVFCIGLYIF), and 427 to 447 (AAPWGMLFTYLYSAWFGFLLI).

It belongs to the ERG4/ERG24 family.

It localises to the endoplasmic reticulum membrane. It carries out the reaction 4,4-dimethyl-5alpha-cholesta-8,24-dien-3beta-ol + NADP(+) = 4,4-dimethyl-5alpha-cholesta-8,14,24-trien-3beta-ol + NADPH + H(+). The protein operates within steroid metabolism; ergosterol biosynthesis. Its function is as follows. Delta(14)-sterol reductase; part of the third module of ergosterol biosynthesis pathway that includes the late steps of the pathway. Catalyzes the reduction of the C14=C15 double bond within 4,4,24-trimethyl ergosta-8,14,24(28)-trienolto produce 4,4-dimethylfecosterol. The third module or late pathway involves the ergosterol synthesis itself through consecutive reactions that mainly occur in the endoplasmic reticulum (ER) membrane. Firstly, the squalene synthase ERG9 catalyzes the condensation of 2 farnesyl pyrophosphate moieties to form squalene, which is the precursor of all steroids. Squalene synthase is crucial for balancing the incorporation of farnesyl diphosphate (FPP) into sterol and nonsterol isoprene synthesis. Secondly, squalene is converted into lanosterol by the consecutive action of the squalene epoxidase ERG1 and the lanosterol synthase ERG7. Then, the delta(24)-sterol C-methyltransferase ERG6 methylates lanosterol at C-24 to produce eburicol. Eburicol is the substrate of the sterol 14-alpha demethylase encoded by CYP51A, CYP51B and CYP51C, to yield 4,4,24-trimethyl ergosta-8,14,24(28)-trienol. CYP51B encodes the enzyme primarily responsible for sterol 14-alpha-demethylation, and plays an essential role in ascospore formation. CYP51A encodes an additional sterol 14-alpha-demethylase, induced on ergosterol depletion and responsible for the intrinsic variation in azole sensitivity. The third CYP51 isoform, CYP51C, does not encode a sterol 14-alpha-demethylase, but is required for full virulence on host wheat ears. The C-14 reductase ERG24 then reduces the C14=C15 double bond which leads to 4,4-dimethylfecosterol. A sequence of further demethylations at C-4, involving the C-4 demethylation complex containing the C-4 methylsterol oxidases ERG25, the sterol-4-alpha-carboxylate 3-dehydrogenase ERG26 and the 3-keto-steroid reductase ERG27, leads to the production of fecosterol via 4-methylfecosterol. ERG28 has a role as a scaffold to help anchor ERG25, ERG26 and ERG27 to the endoplasmic reticulum. The C-8 sterol isomerase ERG2 then catalyzes the reaction which results in unsaturation at C-7 in the B ring of sterols and thus converts fecosterol to episterol. The sterol-C5-desaturases ERG3A and ERG3BB then catalyze the introduction of a C-5 double bond in the B ring to produce 5-dehydroepisterol. The C-22 sterol desaturases ERG5A and ERG5B further convert 5-dehydroepisterol into ergosta-5,7,22,24(28)-tetraen-3beta-ol by forming the C-22(23) double bond in the sterol side chain. Finally, ergosta-5,7,22,24(28)-tetraen-3beta-ol is substrate of the C-24(28) sterol reductase ERG4 to produce ergosterol. The protein is Delta(14)-sterol reductase ERG24B of Gibberella zeae (strain ATCC MYA-4620 / CBS 123657 / FGSC 9075 / NRRL 31084 / PH-1) (Wheat head blight fungus).